A 291-amino-acid chain; its full sequence is N-acetylmannosamine kinase (291 aa).

Residues 5 to 12 (AIDIGGTK) and 132 to 139 (GVGGGVVS) each bind ATP. The Zn(2+) site is built by His-156, Cys-166, Cys-168, and Cys-173.

The protein belongs to the ROK (NagC/XylR) family. NanK subfamily. Homodimer.

It catalyses the reaction an N-acyl-D-mannosamine + ATP = an N-acyl-D-mannosamine 6-phosphate + ADP + H(+). It participates in amino-sugar metabolism; N-acetylneuraminate degradation; D-fructose 6-phosphate from N-acetylneuraminate: step 2/5. Functionally, catalyzes the phosphorylation of N-acetylmannosamine (ManNAc) to ManNAc-6-P. This chain is N-acetylmannosamine kinase, found in Escherichia coli (strain ATCC 8739 / DSM 1576 / NBRC 3972 / NCIMB 8545 / WDCM 00012 / Crooks).